Consider the following 377-residue polypeptide: Cytochrome b (377 aa).

4 helical membrane passes run 34-54 (FGFLLGMCLSIQIFTGLFLSM), 78-100 (WLLRVLHANGGSMFFICLYIHIA), 113-133 (TWMTGVVLLILVMATAFLGYV), and 179-199 (FFTLHFILPFVVLAMVAIHLL). H84 and H98 together coordinate heme b. Heme b-binding residues include H183 and H197. Residue H202 coordinates a ubiquinone. 4 helical membrane passes run 225 to 245 (FTIKDLFGVVVMVWLLMILVL), 288 to 308 (KLGGVVALLASVVILIILPLY), 323 to 343 (MLFWGFISIFILLTWIGAQAI), and 352 to 372 (QILTSLYFFYFILSPLLSVLW).

The protein belongs to the cytochrome b family. As to quaternary structure, the main subunits of complex b-c1 are: cytochrome b, cytochrome c1 and the Rieske protein. The cofactor is heme b.

It is found in the mitochondrion inner membrane. Its function is as follows. Component of the ubiquinol-cytochrome c reductase complex (complex III or cytochrome b-c1 complex) that is part of the mitochondrial respiratory chain. The b-c1 complex mediates electron transfer from ubiquinol to cytochrome c. Contributes to the generation of a proton gradient across the mitochondrial membrane that is then used for ATP synthesis. The sequence is that of Cytochrome b (mt:Cyt-b) from Priapulus caudatus (Priapulid worm).